We begin with the raw amino-acid sequence, 248 residues long: Large ribosomal subunit protein bL9m (248 aa).

The transit peptide at 1–25 directs the protein to the mitochondrion; the sequence is MLKNIYVTPLNLLKSATSLQQQVRT.

It belongs to the bacterial ribosomal protein bL9 family. As to quaternary structure, component of the mitochondrial ribosome large subunit (39S) which comprises a 16S rRNA and about 50 distinct proteins.

It is found in the mitochondrion. This is Large ribosomal subunit protein bL9m (mRpL9) from Drosophila melanogaster (Fruit fly).